The sequence spans 263 residues: NADH dehydrogenase [ubiquinone] iron-sulfur protein 3, mitochondrial (263 aa).

A mitochondrion-targeting transit peptide spans 1–35; sequence MVAAVARLWWRGLLGASALTRGAGRPSVLLLPVRR.

It belongs to the complex I 30 kDa subunit family. In terms of assembly, core subunit of respiratory chain NADH dehydrogenase (Complex I) which is composed of 45 different subunits. Interacts with NDUFAF3. Interacts with RAB5IF. Found in subcomplexes containing subunits NDUFS2, MT-ND1 and NDUFA13.

It localises to the mitochondrion inner membrane. It catalyses the reaction a ubiquinone + NADH + 5 H(+)(in) = a ubiquinol + NAD(+) + 4 H(+)(out). Functionally, core subunit of the mitochondrial membrane respiratory chain NADH dehydrogenase (Complex I) which catalyzes electron transfer from NADH through the respiratory chain, using ubiquinone as an electron acceptor. Essential for the catalytic activity and assembly of complex I. The sequence is that of NADH dehydrogenase [ubiquinone] iron-sulfur protein 3, mitochondrial (NDUFS3) from Pongo pygmaeus (Bornean orangutan).